A 1380-amino-acid polypeptide reads, in one-letter code: DNA-directed RNA polymerase subunit beta (1380 aa).

Belongs to the RNA polymerase beta chain family. As to quaternary structure, the RNAP catalytic core consists of 2 alpha, 1 beta, 1 beta' and 1 omega subunit. When a sigma factor is associated with the core the holoenzyme is formed, which can initiate transcription.

It carries out the reaction RNA(n) + a ribonucleoside 5'-triphosphate = RNA(n+1) + diphosphate. In terms of biological role, DNA-dependent RNA polymerase catalyzes the transcription of DNA into RNA using the four ribonucleoside triphosphates as substrates. In Nitrobacter hamburgensis (strain DSM 10229 / NCIMB 13809 / X14), this protein is DNA-directed RNA polymerase subunit beta.